Here is a 271-residue protein sequence, read N- to C-terminus: Dihydropteroate synthase type-2 (271 aa).

Residues Met1 to Ala259 form the Pterin-binding domain. Asn12 contributes to the 4-aminobenzoate binding site. 4 residues coordinate diphosphate: Asn12, Phe18, Ser51, and Ser52. Mg(2+) is bound at residue Asn12. 7,8-dihydropteroate is bound by residues Ser52, Asp85, Asn104, Asp174, Phe179, Lys213, and Ser214. Residues Asp85, Asn104, and Asp174 each contribute to the (7,8-dihydropterin-6-yl)methyl diphosphate site. The 6-hydroxymethyl-7,8-dihydropterin site is built by Asn104 and Asp174. A (7,8-dihydropterin-6-yl)methyl diphosphate-binding site is contributed by Lys213. Lys213 lines the 6-hydroxymethyl-7,8-dihydropterin pocket. Residue Arg247 participates in 4-aminobenzoate binding. Diphosphate contacts are provided by Arg247 and His249. Arg247–His249 is a binding site for (7,8-dihydropterin-6-yl)methyl diphosphate.

It belongs to the DHPS family. In terms of assembly, homodimer. The cofactor is Mg(2+).

It carries out the reaction (7,8-dihydropterin-6-yl)methyl diphosphate + 4-aminobenzoate = 7,8-dihydropteroate + diphosphate. Its pathway is cofactor biosynthesis; tetrahydrofolate biosynthesis; 7,8-dihydrofolate from 2-amino-4-hydroxy-6-hydroxymethyl-7,8-dihydropteridine diphosphate and 4-aminobenzoate: step 1/2. Its function is as follows. Catalyzes the condensation of para-aminobenzoate (pABA) with 6-hydroxymethyl-7,8-dihydropterin diphosphate (DHPt-PP) to form 7,8-dihydropteroate (H2Pte), the immediate precursor of folate derivatives. Confers resistance to sulfonamide antibiotics, including sulfamethoxazole (SMX), sulfadiazine and sulfisoxazole. The type II enzyme is stable whereas type I DHPS loses its activity rapidly. The protein is Dihydropteroate synthase type-2 of Escherichia coli.